A 209-amino-acid chain; its full sequence is uncharacterized protein (209 aa).

Residues 1–199 (MQVFLDLDET…DELKRVTASL (199 aa)) form the FCP1 homology domain.

This is an uncharacterized protein from Dryophytes versicolor (chameleon treefrog).